We begin with the raw amino-acid sequence, 39 residues long: Photosystem II reaction center protein J (39 aa).

Residues 9-29 form a helical membrane-spanning segment; that stretch reads LWIIATFGGIAALTVVGLFIY.

This sequence belongs to the PsbJ family. PSII is composed of 1 copy each of membrane proteins PsbA, PsbB, PsbC, PsbD, PsbE, PsbF, PsbH, PsbI, PsbJ, PsbK, PsbL, PsbM, PsbT, PsbX, PsbY, PsbZ, Psb30/Ycf12, at least 3 peripheral proteins of the oxygen-evolving complex and a large number of cofactors. It forms dimeric complexes.

It is found in the plastid. The protein localises to the chloroplast thylakoid membrane. Functionally, one of the components of the core complex of photosystem II (PSII). PSII is a light-driven water:plastoquinone oxidoreductase that uses light energy to abstract electrons from H(2)O, generating O(2) and a proton gradient subsequently used for ATP formation. It consists of a core antenna complex that captures photons, and an electron transfer chain that converts photonic excitation into a charge separation. The polypeptide is Photosystem II reaction center protein J (Guillardia theta (Cryptophyte)).